The sequence spans 418 residues: MEYNPFHNGHLYHLTSARELVKPDYTIAVMSGNFCQRGEPAVIDKFARAEIALRMGVDVVLELPVVFATQDAGGFAFGAVCVLDATGVVTDVVFGSESNDIEFLQRVARILYEQPDEYQKFLHEELKKGYSFPNARKYALMRYFSMKGWNEEEVLKLEKSNDILGVEYIHSALKIGSNIRFHTIKRVGAEEKDTSFRGRFSSATAIRNLMREKRWEEVRDSLPEDSFEILMREINEGRGPVFLENMGDFLLSFFRLKNMDFFEKIHGFSEGLEKRFHVCARQTGSYRDFLECVKAKRFTFSRIRRLALFSVFEVNKEFVEKSNTKGPQYIRILGFTEKGREILSLMRKKAKLPIVTNMSLYRKVLEKTDLPVDKQLFLEQIDLDVKATNFYSMFFPSVEQRCGERDFSIHPIFLRTEM.

Residues G95, N161, and R186 each contribute to the ATP site.

Belongs to the TmcAL family.

The protein resides in the cytoplasm. It carries out the reaction cytidine(34) in elongator tRNA(Met) + acetate + ATP = N(4)-acetylcytidine(34) in elongator tRNA(Met) + AMP + diphosphate. Functionally, catalyzes the formation of N(4)-acetylcytidine (ac(4)C) at the wobble position of elongator tRNA(Met), using acetate and ATP as substrates. First activates an acetate ion to form acetyladenylate (Ac-AMP) and then transfers the acetyl group to tRNA to form ac(4)C34. The polypeptide is tRNA(Met) cytidine acetate ligase (Thermotoga maritima (strain ATCC 43589 / DSM 3109 / JCM 10099 / NBRC 100826 / MSB8)).